The primary structure comprises 168 residues: Ubiquitin-conjugating enzyme E2 7 (168 aa).

The tract at residues 1-21 (MATAPARRASSSRSSSEISRT) is disordered. In terms of domain architecture, UBC core spans 6–166 (ARRASSSRSS…VRRAVRKSQE (161 aa)). The Glycyl thioester intermediate role is filled by cysteine 92.

Belongs to the ubiquitin-conjugating enzyme family.

The catalysed reaction is S-ubiquitinyl-[E1 ubiquitin-activating enzyme]-L-cysteine + [E2 ubiquitin-conjugating enzyme]-L-cysteine = [E1 ubiquitin-activating enzyme]-L-cysteine + S-ubiquitinyl-[E2 ubiquitin-conjugating enzyme]-L-cysteine.. It participates in protein modification; protein ubiquitination. Functionally, catalyzes the covalent attachment of ubiquitin to other proteins so as to signal them for selective protein degradation. Involved in the formation of multiubiquitin chains. This Triticum aestivum (Wheat) protein is Ubiquitin-conjugating enzyme E2 7 (UBC7).